We begin with the raw amino-acid sequence, 83 residues long: Cobrotoxin (83 aa).

An N-terminal signal peptide occupies residues Met-1 to Thr-21. Cystine bridges form between Cys-24-Cys-45, Cys-38-Cys-62, Cys-64-Cys-75, and Cys-76-Cys-81.

This sequence belongs to the three-finger toxin family. Short-chain subfamily. Type I alpha-neurotoxin sub-subfamily. In terms of tissue distribution, expressed by the venom gland.

Its subcellular location is the secreted. Binds to muscle nicotinic acetylcholine receptor (nAChR) and inhibit acetylcholine from binding to the receptor, thereby impairing neuromuscular transmission. Has a higher toxicity than cobrotoxin-b. In vivo, when tested on rat arthritis models, shows anti-inflammation and immunosuppression effects. The polypeptide is Cobrotoxin (Naja atra (Chinese cobra)).